A 301-amino-acid polypeptide reads, in one-letter code: uncharacterized protein (301 aa).

Topologically, residues 1 to 5 (MSYKK) are extracellular. A helical membrane pass occupies residues 6 to 26 (FVYFINLFFLLGATLLTFFLI). The Cytoplasmic portion of the chain corresponds to 27–112 (LAGGRTTGVL…NRNAYYYLSR (86 aa)). A helical transmembrane segment spans residues 113–133 (VGWAMLLIGLFFLLITLVSVI). The Extracellular segment spans residues 134–143 (ASLIRYNRRT). Residues 144 to 164 (AALATAMSWITLFFITLSACL) form a helical membrane-spanning segment. Residues 165–191 (YTGCYAKAVKAFHHENRDARLGPKNFG) are Cytoplasmic-facing. The helical transmembrane segment at 192–212 (LIWTTVFLLIVNAICCTIMVA) threads the bilayer. Over 213 to 301 (THKRNEYIYD…YTEQNVPVVS (89 aa)) the chain is Extracellular. The interval 254–301 (VQQSQSHQNHRFFKKLRTKKRTVTSAGDEPDRVQEERVYTEQNVPVVS) is disordered. Over residues 261-275 (QNHRFFKKLRTKKRT) the composition is skewed to basic residues. A compositionally biased stretch (basic and acidic residues) spans 282-292 (EPDRVQEERVY).

The protein belongs to the SUR7 family.

Its subcellular location is the cell membrane. In terms of biological role, involved in sporulation and affects the sphingolipid composition of the plasma membrane. This is an uncharacterized protein from Saccharomyces cerevisiae (strain ATCC 204508 / S288c) (Baker's yeast).